Consider the following 643-residue polypeptide: 1-deoxy-D-xylulose-5-phosphate synthase (643 aa).

Residues His-72 and 113–115 (GHA) contribute to the thiamine diphosphate site. A Mg(2+)-binding site is contributed by Asp-144. Thiamine diphosphate contacts are provided by residues 145–146 (GA), Asn-174, Tyr-287, and Glu-370. Asn-174 is a Mg(2+) binding site.

The protein belongs to the transketolase family. DXPS subfamily. In terms of assembly, homodimer. Mg(2+) is required as a cofactor. Requires thiamine diphosphate as cofactor.

It carries out the reaction D-glyceraldehyde 3-phosphate + pyruvate + H(+) = 1-deoxy-D-xylulose 5-phosphate + CO2. It functions in the pathway metabolic intermediate biosynthesis; 1-deoxy-D-xylulose 5-phosphate biosynthesis; 1-deoxy-D-xylulose 5-phosphate from D-glyceraldehyde 3-phosphate and pyruvate: step 1/1. Its function is as follows. Catalyzes the acyloin condensation reaction between C atoms 2 and 3 of pyruvate and glyceraldehyde 3-phosphate to yield 1-deoxy-D-xylulose-5-phosphate (DXP). In Prochlorococcus marinus (strain MIT 9211), this protein is 1-deoxy-D-xylulose-5-phosphate synthase.